Reading from the N-terminus, the 257-residue chain is Imidazole glycerol phosphate synthase subunit HisF (257 aa).

Catalysis depends on residues D11 and D130.

The protein belongs to the HisA/HisF family. In terms of assembly, heterodimer of HisH and HisF.

It localises to the cytoplasm. It carries out the reaction 5-[(5-phospho-1-deoxy-D-ribulos-1-ylimino)methylamino]-1-(5-phospho-beta-D-ribosyl)imidazole-4-carboxamide + L-glutamine = D-erythro-1-(imidazol-4-yl)glycerol 3-phosphate + 5-amino-1-(5-phospho-beta-D-ribosyl)imidazole-4-carboxamide + L-glutamate + H(+). It participates in amino-acid biosynthesis; L-histidine biosynthesis; L-histidine from 5-phospho-alpha-D-ribose 1-diphosphate: step 5/9. Functionally, IGPS catalyzes the conversion of PRFAR and glutamine to IGP, AICAR and glutamate. The HisF subunit catalyzes the cyclization activity that produces IGP and AICAR from PRFAR using the ammonia provided by the HisH subunit. This is Imidazole glycerol phosphate synthase subunit HisF from Shewanella putrefaciens (strain CN-32 / ATCC BAA-453).